The chain runs to 79 residues: Acyl carrier protein (79 aa).

Positions 2–77 constitute a Carrier domain; the sequence is SDIEARVKKI…LAIDYAKNNV (76 aa). S37 carries the post-translational modification O-(pantetheine 4'-phosphoryl)serine.

It belongs to the acyl carrier protein (ACP) family. In terms of processing, 4'-phosphopantetheine is transferred from CoA to a specific serine of apo-ACP by AcpS. This modification is essential for activity because fatty acids are bound in thioester linkage to the sulfhydryl of the prosthetic group.

The protein resides in the cytoplasm. It participates in lipid metabolism; fatty acid biosynthesis. Carrier of the growing fatty acid chain in fatty acid biosynthesis. The protein is Acyl carrier protein of Leptothrix cholodnii (strain ATCC 51168 / LMG 8142 / SP-6) (Leptothrix discophora (strain SP-6)).